Reading from the N-terminus, the 428-residue chain is Putative UPF0496 protein 5 (428 aa).

The segment covering 1–14 (MGNRHGIMRPRRLA) has biased composition (basic residues). The interval 1 to 40 (MGNRHGIMRPRRLASGRSAAAAEEEGEDGEGEPGSYEAAC) is disordered. The span at 22–31 (AEEEGEDGEG) shows a compositional bias: acidic residues. 2 helical membrane-spanning segments follow: residues 229–249 (IVFL…AAIA) and 252–272 (PVAA…GKWM).

The protein belongs to the UPF0496 family.

The protein resides in the membrane. In Oryza sativa subsp. indica (Rice), this protein is Putative UPF0496 protein 5.